We begin with the raw amino-acid sequence, 335 residues long: E3 ubiquitin-protein ligase NLA (335 aa).

The SPX domain occupies 1–154 (MKFCKKYEEY…ESRQGQAFKT (154 aa)). The RING-type zinc finger occupies 231 to 280 (CSICLDTVFDPISLTCGHIYCYMCACSAASVNVVDGLKTAEATEKCPLCR).

As to quaternary structure, interacts with UBC8. Interacts with PHT1-1 and PHT1-4. Forms homodimers (via RING domain). Interacts with UBC24/PHO2. Interacts with NPF2.13/NRT1.7. Interacts with NAC92/ORE1. In terms of tissue distribution, high expression in roots and stems, medium in seedlings, flowers, rosette and cauline leaves, and very low in siliques. Detected in cotyledons, hypocotyls, pedicel, receptacle, pistil, sepal, filament of stamen and at the two ends of developing siliques.

It localises to the nucleus speckle. The protein resides in the nucleus. It is found in the cell membrane. It carries out the reaction S-ubiquitinyl-[E2 ubiquitin-conjugating enzyme]-L-cysteine + [acceptor protein]-L-lysine = [E2 ubiquitin-conjugating enzyme]-L-cysteine + N(6)-ubiquitinyl-[acceptor protein]-L-lysine.. It participates in protein modification; protein ubiquitination. Functionally, E3 ubiquitin-protein ligase that mediates E2-dependent protein ubiquitination. Plays a role in salicylic acid-mediated negative feedback regulation of salicylic acid (SA) accumulation. May be involved in the overall regulation of SA, benzoic acid and phenylpropanoid biosynthesis. Involved in defense response. May act as negative regulator of resistance to the necrotrophic fungal pathogen Plectosphaerella cucumerina by modulating the accumulation of the phytoalexin camalexin and the salicylic acid- and jasmonate- dependent defense pathways. Controls the adaptability to nitrogen limitation by channeling the phenylpropanoid metabolic flux to the induced anthocyanin synthesis. Involved in the regulation of inorganic phosphate (Pi) homeostasis in a nitrate-dependent fashion. Directs the ubiquitination and subsequent degradation of the plasma membrane-localized inorganic phosphate transporters PHT1-1 and PHT1-4, to maintain phosphate homeostasis. The ubiquitination of PHTs triggers their clathrin-dependent endocytosis and trafficking to the vacuole through the endosomal pathway for degradation. Functions cooperatively with UBC24/PHO2 to regulate the abundance of PHT1-1, PHT1-2 and PHT1-3 in different subcellular compartments. Regulates Pi homeostasis by mediating, cooperatively with UBC24/PHO2, polyubiquitination of PHT1-4 and its targeting for degradation. Directs the polyubiquitination and subsequent degradation of the plasma membrane-localized nitrate transporter NPF2.13/NRT1.7, to help plants to adapt to nitrogen deficiency by regulating the source-to-sink remobilization of nitrate. Regulates leaf senescence during nitrogen deficiency by mediating, cooperatively with UBC24/PHO2, polyubiquitination of NAC92/ORE1 and its targeting for degradation. This chain is E3 ubiquitin-protein ligase NLA, found in Arabidopsis thaliana (Mouse-ear cress).